A 704-amino-acid polypeptide reads, in one-letter code: Ion-translocating oxidoreductase complex subunit C (704 aa).

4Fe-4S ferredoxin-type domains are found at residues 368-397 (MGAP…QQLY) and 407-436 (KATA…VQYF). Residues Cys-377, Cys-380, Cys-383, Cys-387, Cys-416, Cys-419, Cys-422, and Cys-426 each coordinate [4Fe-4S] cluster. The disordered stretch occupies residues 536–685 (RAKQAAHPMA…ADPRKAAVAA (150 aa)). Positions 556-565 (KAAVEAAIAR) are enriched in low complexity.

This sequence belongs to the 4Fe4S bacterial-type ferredoxin family. RnfC subfamily. The complex is composed of six subunits: RsxA, RsxB, RsxC, RsxD, RsxE and RsxG. [4Fe-4S] cluster is required as a cofactor.

The protein localises to the cell inner membrane. Part of a membrane-bound complex that couples electron transfer with translocation of ions across the membrane. Required to maintain the reduced state of SoxR. In Salmonella dublin (strain CT_02021853), this protein is Ion-translocating oxidoreductase complex subunit C.